The sequence spans 348 residues: Dihydroorotase (348 aa).

His-17 and His-19 together coordinate Zn(2+). Substrate is bound by residues 19–21 (HLR) and Asn-45. The Zn(2+) site is built by Lys-103, His-140, and His-178. Position 103 is an N6-carboxylysine (Lys-103). His-140 is a substrate binding site. Leu-223 lines the substrate pocket. Asp-251 is a Zn(2+) binding site. The active site involves Asp-251. Residues His-255 and Ala-267 each contribute to the substrate site.

Belongs to the metallo-dependent hydrolases superfamily. DHOase family. Class II DHOase subfamily. In terms of assembly, homodimer. Zn(2+) serves as cofactor.

The catalysed reaction is (S)-dihydroorotate + H2O = N-carbamoyl-L-aspartate + H(+). The protein operates within pyrimidine metabolism; UMP biosynthesis via de novo pathway; (S)-dihydroorotate from bicarbonate: step 3/3. Functionally, catalyzes the reversible cyclization of carbamoyl aspartate to dihydroorotate. The protein is Dihydroorotase of Escherichia coli (strain UTI89 / UPEC).